A 365-amino-acid polypeptide reads, in one-letter code: Protein-glutamate methylesterase/protein-glutamine glutaminase (365 aa).

The Response regulatory domain maps to 5-122; sequence KVLIVDDSAF…SLDIRKIGEK (118 aa). Asp56 carries the 4-aspartylphosphate modification. A compositionally biased stretch (basic and acidic residues) spans 146 to 155; the sequence is IKKEKQDESS. The tract at residues 146-167 is disordered; that stretch reads IKKEKQDESSTPKPQVEKTSGL. The segment covering 156 to 167 has biased composition (polar residues); it reads TPKPQVEKTSGL. Residues 177–363 enclose the CheB-type methylesterase domain; it reads ILIGSSTGGP…LEIIKFAKKI (187 aa). Active-site residues include Ser182, His208, and Asp305.

The protein belongs to the CheB family. In terms of processing, phosphorylated by CheA. Phosphorylation of the N-terminal regulatory domain activates the methylesterase activity.

Its subcellular location is the cytoplasm. The catalysed reaction is [protein]-L-glutamate 5-O-methyl ester + H2O = L-glutamyl-[protein] + methanol + H(+). The enzyme catalyses L-glutaminyl-[protein] + H2O = L-glutamyl-[protein] + NH4(+). Involved in chemotaxis. Part of a chemotaxis signal transduction system that modulates chemotaxis in response to various stimuli. Catalyzes the demethylation of specific methylglutamate residues introduced into the chemoreceptors (methyl-accepting chemotaxis proteins or MCP) by CheR. Also mediates the irreversible deamidation of specific glutamine residues to glutamic acid. This chain is Protein-glutamate methylesterase/protein-glutamine glutaminase, found in Methanococcus maripaludis (strain DSM 14266 / JCM 13030 / NBRC 101832 / S2 / LL).